We begin with the raw amino-acid sequence, 318 residues long: Methionyl-tRNA formyltransferase (318 aa).

Residue 112 to 115 (SILP) coordinates (6S)-5,6,7,8-tetrahydrofolate.

Belongs to the Fmt family.

The catalysed reaction is L-methionyl-tRNA(fMet) + (6R)-10-formyltetrahydrofolate = N-formyl-L-methionyl-tRNA(fMet) + (6S)-5,6,7,8-tetrahydrofolate + H(+). Functionally, attaches a formyl group to the free amino group of methionyl-tRNA(fMet). The formyl group appears to play a dual role in the initiator identity of N-formylmethionyl-tRNA by promoting its recognition by IF2 and preventing the misappropriation of this tRNA by the elongation apparatus. This is Methionyl-tRNA formyltransferase from Shewanella putrefaciens (strain CN-32 / ATCC BAA-453).